We begin with the raw amino-acid sequence, 262 residues long: 5-methyltetrahydrofolate:corrinoid/iron-sulfur protein co-methyltransferase (262 aa).

Positions 1–246 constitute a Pterin-binding domain; the sequence is MLIIGERING…ETAATAEILL (246 aa). (6S)-5-methyl-5,6,7,8-tetrahydrofolate is bound by residues Asn-96 and Asp-160. Lys-184 is a Ca(2+) binding site. The (6S)-5-methyl-5,6,7,8-tetrahydrofolate site is built by Asn-199, Gln-202, and Arg-207. Residue 202 to 203 participates in methylcob(III)alamin binding; the sequence is QN. Ca(2+)-binding residues include Gly-222 and Asp-224.

This sequence belongs to the vitamin-B12 dependent methionine synthase family. Heterohexamer composed of 2 subunits of AcsC, 2 subunits of AcsD and 2 subunits of AcsE. It depends on Ca(2+) as a cofactor.

The enzyme catalyses methyl-Co(III)-[corrinoid Fe-S protein] + (6S)-5,6,7,8-tetrahydrofolate = Co(I)-[corrinoid Fe-S protein] + (6S)-5-methyl-5,6,7,8-tetrahydrofolate + H(+). Functionally, methyltransferase that mediates the transfer of a N5-methyl group of (6S)-methyltetrahydrofolate to the 5-methoxybenzimidazolylcobamide cofactor of a corrinoid/Fe-S protein (AcsC/AcsD) in the anaerobic acetyl-CoA pathway (Wood-Ljungdahl pathway) of carbon monoxide and carbon dioxide fixation. The protein is 5-methyltetrahydrofolate:corrinoid/iron-sulfur protein co-methyltransferase (acsE) of Moorella thermoacetica (Clostridium thermoaceticum).